Reading from the N-terminus, the 504-residue chain is D-alanine--D-alanyl carrier protein ligase (504 aa).

Residue 152 to 153 coordinates ATP; sequence TS. Asp197 is a binding site for D-alanine. 292–297 lines the ATP pocket; that stretch reads NTYGPT. Val301 contacts D-alanine. ATP is bound by residues Asp383, 394 to 397, and Lys492; that span reads YNGR. Residue Lys492 coordinates D-alanine.

It belongs to the ATP-dependent AMP-binding enzyme family. DltA subfamily.

It localises to the cytoplasm. The enzyme catalyses holo-[D-alanyl-carrier protein] + D-alanine + ATP = D-alanyl-[D-alanyl-carrier protein] + AMP + diphosphate. Its pathway is cell wall biogenesis; lipoteichoic acid biosynthesis. Catalyzes the first step in the D-alanylation of lipoteichoic acid (LTA), the activation of D-alanine and its transfer onto the D-alanyl carrier protein (Dcp) DltC. In an ATP-dependent two-step reaction, forms a high energy D-alanyl-AMP intermediate, followed by transfer of the D-alanyl residue as a thiol ester to the phosphopantheinyl prosthetic group of the Dcp. D-alanylation of LTA plays an important role in modulating the properties of the cell wall in Gram-positive bacteria, influencing the net charge of the cell wall. The polypeptide is D-alanine--D-alanyl carrier protein ligase (Bacillus cereus (strain ATCC 10987 / NRS 248)).